The following is a 305-amino-acid chain: Pseudouridine-5'-phosphate glycosidase (305 aa).

Glu-30 serves as the catalytic Proton donor. Lys-91 and Val-111 together coordinate substrate. Asp-143 serves as a coordination point for Mn(2+). Residue 145 to 147 (SAD) participates in substrate binding. The active-site Nucleophile is the Lys-164.

Belongs to the pseudouridine-5'-phosphate glycosidase family. In terms of assembly, homotrimer. Requires Mn(2+) as cofactor.

The enzyme catalyses D-ribose 5-phosphate + uracil = psi-UMP + H2O. Catalyzes the reversible cleavage of pseudouridine 5'-phosphate (PsiMP) to ribose 5-phosphate and uracil. Functions biologically in the cleavage direction, as part of a pseudouridine degradation pathway. The chain is Pseudouridine-5'-phosphate glycosidase from Mesorhizobium japonicum (strain LMG 29417 / CECT 9101 / MAFF 303099) (Mesorhizobium loti (strain MAFF 303099)).